We begin with the raw amino-acid sequence, 1072 residues long: DNA-directed RNA polymerase subunit beta (1072 aa).

Belongs to the RNA polymerase beta chain family. In plastids the minimal PEP RNA polymerase catalytic core is composed of four subunits: alpha, beta, beta', and beta''. When a (nuclear-encoded) sigma factor is associated with the core the holoenzyme is formed, which can initiate transcription.

It is found in the plastid. Its subcellular location is the chloroplast. The catalysed reaction is RNA(n) + a ribonucleoside 5'-triphosphate = RNA(n+1) + diphosphate. Its function is as follows. DNA-dependent RNA polymerase catalyzes the transcription of DNA into RNA using the four ribonucleoside triphosphates as substrates. In Capsella bursa-pastoris (Shepherd's purse), this protein is DNA-directed RNA polymerase subunit beta.